Consider the following 552-residue polypeptide: MTKRIDSSLLYTALVVLLLLGVVHRSNARPRVNRPPGFMRFISNATDFASEDYYDYIIVGGGTAGCPLAATLSQSFRVLLLERGGVPYNRPNVMSHDGFLTTLTDVNNFDSPAQSFISEEGVPNARGRVLGGSSAINAGFYSRADKQFFENSGLVWDLSSVNQSYEWVERAIVFRPQLRTWQTAIRDALLEVGVHPFNGFTLEHKVGTKIGGSTFDRTGRRHSSADLLRYARSSNIRVAVYATVERVLLASSPSVSGSNVSAIGVVYRDQLGRFHHALIRDRGEVILSAGALGSPQLLFLSGIGPRSYLSTWGIPVALDQPHVGDFVYDNPRNGISIVPPVPMENSLIQVVGVTEDGAFLEAASNVIPFASPLHSVFIRAPASPLYVPVTTIMEKILGPVSIGLLRLASTDVRINPVVRFNYFSDPQDLERCVNGTRKIGEILRSRAMQDFMIREWFGNRRFRFVGAPLPVDQSNDLVMADFCRRTVSTIWHYHGGAVVGKVVDSDLKVIGVNSLRLVDGSTFNISPGTNPQATLMMLGRYMGLKMLRERMR.

A signal peptide spans 1-28 (MTKRIDSSLLYTALVVLLLLGVVHRSNA). Asn-44 carries N-linked (GlcNAc...) asparagine glycosylation. Residue 55 to 82 (DYIIVGGGTAGCPLAATLSQSFRVLLLE) participates in FAD binding. Asn-162, Asn-259, and Asn-434 each carry an N-linked (GlcNAc...) asparagine glycan. His-492 acts as the Proton acceptor in catalysis.

Belongs to the GMC oxidoreductase family. Monomer. The cofactor is FAD. Post-translationally, glycosylated.

It carries out the reaction (R)-mandelonitrile = benzaldehyde + hydrogen cyanide. The chain is (R)-mandelonitrile lyase-like from Arabidopsis thaliana (Mouse-ear cress).